The following is a 710-amino-acid chain: Methionine--tRNA ligase (710 aa).

Positions 26–36 (PYANGQIHIGH) match the 'HIGH' region motif. 4 residues coordinate Zn(2+): Cys-157, Cys-160, Cys-170, and Cys-173. A 'KMSKS' region motif is present at residues 347–351 (KMSKS). Lys-350 contacts ATP. Residues 604-710 (DFAKIDLRIA…SGAKPGMRVK (107 aa)) form the tRNA-binding domain.

Belongs to the class-I aminoacyl-tRNA synthetase family. MetG type 1 subfamily. In terms of assembly, homodimer. It depends on Zn(2+) as a cofactor.

The protein localises to the cytoplasm. The enzyme catalyses tRNA(Met) + L-methionine + ATP = L-methionyl-tRNA(Met) + AMP + diphosphate. Functionally, is required not only for elongation of protein synthesis but also for the initiation of all mRNA translation through initiator tRNA(fMet) aminoacylation. The chain is Methionine--tRNA ligase from Paraburkholderia xenovorans (strain LB400).